Consider the following 224-residue polypeptide: Phosphoribosylformylglycinamidine synthase subunit PurQ (224 aa).

The Glutamine amidotransferase type-1 domain occupies 2 to 224; that stretch reads TVAIIRFGGS…DGQGVLEGFR (223 aa). The Nucleophile role is filled by C85. Catalysis depends on residues H202 and E204. Residues 204–224 are disordered; it reads ERASLPDIGPTDGQGVLEGFR.

As to quaternary structure, part of the FGAM synthase complex composed of 1 PurL, 1 PurQ and 2 PurS subunits.

It is found in the cytoplasm. It catalyses the reaction N(2)-formyl-N(1)-(5-phospho-beta-D-ribosyl)glycinamide + L-glutamine + ATP + H2O = 2-formamido-N(1)-(5-O-phospho-beta-D-ribosyl)acetamidine + L-glutamate + ADP + phosphate + H(+). The enzyme catalyses L-glutamine + H2O = L-glutamate + NH4(+). It functions in the pathway purine metabolism; IMP biosynthesis via de novo pathway; 5-amino-1-(5-phospho-D-ribosyl)imidazole from N(2)-formyl-N(1)-(5-phospho-D-ribosyl)glycinamide: step 1/2. Part of the phosphoribosylformylglycinamidine synthase complex involved in the purines biosynthetic pathway. Catalyzes the ATP-dependent conversion of formylglycinamide ribonucleotide (FGAR) and glutamine to yield formylglycinamidine ribonucleotide (FGAM) and glutamate. The FGAM synthase complex is composed of three subunits. PurQ produces an ammonia molecule by converting glutamine to glutamate. PurL transfers the ammonia molecule to FGAR to form FGAM in an ATP-dependent manner. PurS interacts with PurQ and PurL and is thought to assist in the transfer of the ammonia molecule from PurQ to PurL. In Natronomonas pharaonis (strain ATCC 35678 / DSM 2160 / CIP 103997 / JCM 8858 / NBRC 14720 / NCIMB 2260 / Gabara) (Halobacterium pharaonis), this protein is Phosphoribosylformylglycinamidine synthase subunit PurQ.